The chain runs to 1256 residues: GPI inositol-deacylase (1256 aa).

The segment covering 37 to 48 (DVYANSTTNATA) has biased composition (polar residues). The interval 37–203 (DVYANSTTNA…MEKEEEQKFV (167 aa)) is disordered. Asparagine 41 and asparagine 45 each carry an N-linked (GlcNAc...) asparagine glycan. Low complexity predominate over residues 59-68 (PRPSRPSQSS). Positions 69–83 (AAERTSPESPSVRQS) are enriched in polar residues. A compositionally biased stretch (low complexity) spans 107–135 (QSPSQQSQNQQQQQQQQQQQQQQQQQQQS). Residues 143–156 (SGNFNWKLSHSRNG) are compositionally biased toward polar residues. A glycan (N-linked (GlcNAc...) asparagine) is linked at asparagine 155. Residues 165–180 (FFSSSFSHSPSTPPLS) show a composition bias toward low complexity. The segment covering 190–202 (HSKEMEKEEEQKF) has biased composition (basic and acidic residues). The chain crosses the membrane as a helical span at residues 214–234 (AITFVTLLISILGIGFLALVL). A glycan (N-linked (GlcNAc...) asparagine) is linked at asparagine 235. The active site involves serine 397. An N-linked (GlcNAc...) asparagine glycan is attached at asparagine 582. A run of 2 helical transmembrane segments spans residues 882 to 902 (LYMRYRTVFAAFPLLVVTLVL) and 929 to 949 (SIPLVLAFLTFLSLFIWNSSS). The N-linked (GlcNAc...) asparagine glycan is linked to asparagine 960. The next 6 membrane-spanning stretches (helical) occupy residues 980-1000 (PFFWFLVPVIGLICVGICTVF), 1005-1025 (LTLVHILSTAVSLLSFRPGWI), 1053-1073 (ILLVLVSTLIPYQFAYLVCCL), 1103-1123 (SILLLMLWILPINLPILVVWI), 1130-1150 (WLTPFSSHHNVLSIMPFIILV), and 1172-1192 (VLLFGIALYAAIYGVSYAYML). 3 N-linked (GlcNAc...) asparagine glycosylation sites follow: asparagine 1212, asparagine 1239, and asparagine 1242.

Belongs to the GPI inositol-deacylase family.

The protein resides in the endoplasmic reticulum membrane. Its function is as follows. Involved in inositol deacylation of GPI-anchored proteins which plays important roles in the quality control and ER-associated degradation of GPI-anchored proteins. The protein is GPI inositol-deacylase (bst-1) of Neurospora crassa (strain ATCC 24698 / 74-OR23-1A / CBS 708.71 / DSM 1257 / FGSC 987).